A 146-amino-acid polypeptide reads, in one-letter code: Hemoglobin subunit beta-1 (146 aa).

The region spanning 2-146 is the Globin domain; that stretch reads HWTAEEKQLI…VAHALARRYH (145 aa). The heme b site is built by His-63 and His-92.

It belongs to the globin family. Heterotetramer of two alpha chains and two beta chains. Red blood cells.

In terms of biological role, involved in oxygen transport from the lung to the various peripheral tissues. The chain is Hemoglobin subunit beta-1 (HBB1) from Iguana iguana (Common iguana).